The following is a 120-amino-acid chain: Large ribosomal subunit protein bL19 (120 aa).

This sequence belongs to the bacterial ribosomal protein bL19 family.

Functionally, this protein is located at the 30S-50S ribosomal subunit interface and may play a role in the structure and function of the aminoacyl-tRNA binding site. The sequence is that of Large ribosomal subunit protein bL19 from Cyanothece sp. (strain PCC 7425 / ATCC 29141).